An 883-amino-acid polypeptide reads, in one-letter code: DNA mismatch repair protein MutS (883 aa).

619–626 provides a ligand contact to ATP; the sequence is GPNMGGKS.

It belongs to the DNA mismatch repair MutS family.

Functionally, this protein is involved in the repair of mismatches in DNA. It is possible that it carries out the mismatch recognition step. This protein has a weak ATPase activity. This chain is DNA mismatch repair protein MutS, found in Marinomonas sp. (strain MWYL1).